A 431-amino-acid chain; its full sequence is Enolase (431 aa).

Glutamine 167 is a binding site for (2R)-2-phosphoglycerate. The active-site Proton donor is glutamate 209. Mg(2+) contacts are provided by aspartate 246, glutamate 289, and aspartate 316. Residues lysine 341, arginine 370, serine 371, and lysine 392 each contribute to the (2R)-2-phosphoglycerate site. The Proton acceptor role is filled by lysine 341.

Belongs to the enolase family. As to quaternary structure, component of the RNA degradosome, a multiprotein complex involved in RNA processing and mRNA degradation. The cofactor is Mg(2+).

The protein localises to the cytoplasm. It is found in the secreted. It localises to the cell surface. It catalyses the reaction (2R)-2-phosphoglycerate = phosphoenolpyruvate + H2O. It participates in carbohydrate degradation; glycolysis; pyruvate from D-glyceraldehyde 3-phosphate: step 4/5. Its function is as follows. Catalyzes the reversible conversion of 2-phosphoglycerate (2-PG) into phosphoenolpyruvate (PEP). It is essential for the degradation of carbohydrates via glycolysis. The polypeptide is Enolase (Shewanella sp. (strain ANA-3)).